We begin with the raw amino-acid sequence, 86 residues long: Progonadoliberin-2 (86 aa).

Residues 1–24 form the signal peptide; sequence MVHICRLLVLMGMLLCLSAQFASS. Gln25 is modified (pyrrolidone carboxylic acid). Position 34 is a glycine amide (Gly34).

The protein belongs to the GnRH family.

It localises to the secreted. Functionally, stimulates the secretion of gonadotropins. The protein is Progonadoliberin-2 (gnrh2) of Rutilus rutilus (Roach).